The chain runs to 81 residues: Photosystem I iron-sulfur center (81 aa).

4Fe-4S ferredoxin-type domains follow at residues 2 to 31 and 39 to 68; these read SHIVKIYDTCIGCTQCVRACPLDVLEMVPW and MASAPRTEDCVGCKRCESACPTDFLSVRVY. Cysteine 11, cysteine 14, cysteine 17, cysteine 21, cysteine 48, cysteine 51, cysteine 54, and cysteine 58 together coordinate [4Fe-4S] cluster.

In terms of assembly, the eukaryotic PSI reaction center is composed of at least 11 subunits. [4Fe-4S] cluster is required as a cofactor.

The protein localises to the plastid. It localises to the chloroplast thylakoid membrane. The catalysed reaction is reduced [plastocyanin] + hnu + oxidized [2Fe-2S]-[ferredoxin] = oxidized [plastocyanin] + reduced [2Fe-2S]-[ferredoxin]. Functionally, apoprotein for the two 4Fe-4S centers FA and FB of photosystem I (PSI); essential for photochemical activity. FB is the terminal electron acceptor of PSI, donating electrons to ferredoxin. The C-terminus interacts with PsaA/B/D and helps assemble the protein into the PSI complex. Required for binding of PsaD and PsaE to PSI. PSI is a plastocyanin/cytochrome c6-ferredoxin oxidoreductase, converting photonic excitation into a charge separation, which transfers an electron from the donor P700 chlorophyll pair to the spectroscopically characterized acceptors A0, A1, FX, FA and FB in turn. The sequence is that of Photosystem I iron-sulfur center from Stigeoclonium helveticum (Green alga).